The following is a 427-amino-acid chain: Serine--tRNA ligase (427 aa).

231-233 (TAE) is an L-serine binding site. Position 262–264 (262–264 (RSE)) interacts with ATP. Glutamate 285 lines the L-serine pocket. ATP is bound at residue 349-352 (EISS). Serine 385 contacts L-serine.

This sequence belongs to the class-II aminoacyl-tRNA synthetase family. Type-1 seryl-tRNA synthetase subfamily. As to quaternary structure, homodimer. The tRNA molecule binds across the dimer.

The protein localises to the cytoplasm. The catalysed reaction is tRNA(Ser) + L-serine + ATP = L-seryl-tRNA(Ser) + AMP + diphosphate + H(+). The enzyme catalyses tRNA(Sec) + L-serine + ATP = L-seryl-tRNA(Sec) + AMP + diphosphate + H(+). Its pathway is aminoacyl-tRNA biosynthesis; selenocysteinyl-tRNA(Sec) biosynthesis; L-seryl-tRNA(Sec) from L-serine and tRNA(Sec): step 1/1. In terms of biological role, catalyzes the attachment of serine to tRNA(Ser). Is also able to aminoacylate tRNA(Sec) with serine, to form the misacylated tRNA L-seryl-tRNA(Sec), which will be further converted into selenocysteinyl-tRNA(Sec). This is Serine--tRNA ligase from Listeria welshimeri serovar 6b (strain ATCC 35897 / DSM 20650 / CCUG 15529 / CIP 8149 / NCTC 11857 / SLCC 5334 / V8).